Consider the following 218-residue polypeptide: MNIKEFLSNKKGASGIGTLIVFIAMVLVAAVAASVLINTSGFLQQKASTTGKESTEQVASGLQVTGVTGVNSTDSENITHIVAYITPKAGSSAIDLSQAKLFVTYNGVSAVLKANESAIDGTSGTPDVLSATLLSNTSATEYQVVSLQDFDGSVAKNQVINKGDLVAIRISTGQVFSSTKGIPTRAHVSGKLQPEFGAPGIIEFTTPATFTTKVVELQ.

Positions 1-12 (MNIKEFLSNKKG) are excised as a propeptide. 5 N-linked (GlcNAc...) asparagine glycosylation sites follow: Asn38, Asn71, Asn77, Asn115, and Asn136.

It belongs to the archaeal flagellin family. Post-translationally, N-linked glycans consist of the 779 Da trisaccharide beta-ManNAc(Thr)-(1-4)-beta-GlcNAc3NAcA-(1-3)-beta-GlcNAc.

The protein localises to the archaeal flagellum. Flagellin is the subunit protein which polymerizes to form the filaments of archaeal flagella. The chain is Flagellin B1 (flaB1) from Methanococcus voltae.